The sequence spans 247 residues: Putative trypsin-6 (247 aa).

Residues 1-15 form the signal peptide; that stretch reads MNPLLILAFVGAAVA. The Peptidase S1 domain occupies 24-244; sequence IVGGYTCEEN…YVDWIKDTIA (221 aa). An intrachain disulfide couples Cys48 to Cys64. Residue His63 is the Charge relay system of the active site. 4 residues coordinate Ca(2+): Glu75, Asn77, Val80, and Glu85. The Charge relay system role is filled by Asp107. Intrachain disulfides connect Cys139-Cys206, Cys171-Cys185, and Cys196-Cys220. Ser200 functions as the Charge relay system in the catalytic mechanism.

It belongs to the peptidase S1 family. Tryptase subfamily. As to expression, overexpressed in metastasing in non small cell lung tumors, leading to an enhanced cell migration.

The protein localises to the secreted. It carries out the reaction Preferential cleavage: Arg-|-Xaa, Lys-|-Xaa.. In terms of biological role, may regulate cell migration. This chain is Putative trypsin-6 (PRSS3P2), found in Homo sapiens (Human).